The following is a 24-amino-acid chain: Grammistin Gs G (24 aa).

Belongs to the grammistin family. Group 1 subfamily. As to quaternary structure, exists as aggregates of 3-4 molecules. Expressed by the skin glands.

It is found in the secreted. Functionally, thanks to its abundant amphiphilic alpha-helices, it may integrate into membrane phospholipids, leading to lysis of the membrane. Its high hemolytic activity is inhibited by phospholipids, but not by cholesterol. Has antibacterial activity with a broad spectrum against various species of bacteria including both Gram-positive and Gram-negative groups. Also has high ichthyotoxic activity. The polypeptide is Grammistin Gs G (Grammistes sexlineatus (Goldenstriped soapfish)).